The sequence spans 469 residues: Interstitial collagenase (469 aa).

The N-terminal stretch at 1-18 (MPRLPLLLLLLWGTGSHG) is a signal peptide. Positions 19–99 (FPAATSETQE…PRCGVPDVAP (81 aa)) are cleaved as a propeptide — activation peptide. Residues 90-97 (PRCGVPDV) carry the Cysteine switch motif. Cys-92 is a binding site for Zn(2+). The N-linked (GlcNAc...) asparagine glycan is linked to Asn-120. Residues Asp-124 and Asp-158 each contribute to the Ca(2+) site. Residues His-168 and Asp-170 each contribute to the Zn(2+) site. Positions 175, 176, 178, and 180 each coordinate Ca(2+). His-183 lines the Zn(2+) pocket. Positions 190, 192, and 194 each coordinate Ca(2+). His-196 lines the Zn(2+) pocket. Residues Asp-198, Asp-199, and Glu-201 each coordinate Ca(2+). His-218 contributes to the Zn(2+) binding site. Glu-219 is a catalytic residue. Residues His-222 and His-228 each coordinate Zn(2+). A Phosphothreonine modification is found at Thr-274. 4 Hemopexin repeats span residues 275–324 (PEVC…WPQL), 325–371 (PNGL…FGFP), 374–422 (VKSI…FPGI), and 423–466 (GNKV…WFNC). Cysteines 278 and 466 form a disulfide. Ca(2+) is bound by residues Asp-285 and Gln-329. The residue at position 360 (Tyr-360) is a Phosphotyrosine; by PKDCC. Residues Asp-378 and Asp-427 each contribute to the Ca(2+) site.

Belongs to the peptidase M10A family. Ca(2+) serves as cofactor. Requires Zn(2+) as cofactor. Post-translationally, tyrosine phosphorylated in platelets by PKDCC/VLK.

The protein localises to the secreted. It localises to the extracellular space. Its subcellular location is the extracellular matrix. The enzyme catalyses Cleavage of the triple helix of collagen at about three-quarters of the length of the molecule from the N-terminus, at 775-Gly-|-Ile-776 in the alpha1(I) chain. Cleaves synthetic substrates and alpha-macroglobulins at bonds where P1' is a hydrophobic residue.. Can be activated without removal of the activation peptide. In terms of biological role, cleaves collagens of types I, II, and III at one site in the helical domain. Also cleaves collagens of types VII and X. The chain is Interstitial collagenase (MMP1) from Bos taurus (Bovine).